We begin with the raw amino-acid sequence, 679 residues long: Leucine-rich repeat, immunoglobulin-like domain and transmembrane domain-containing protein 3 (679 aa).

A signal peptide spans 1–19 (MHLFACLCIVLSFLEGVGC). Residues 20–582 (LCPSQCTCDY…RVEGDDSQWS (563 aa)) lie on the Lumenal side of the membrane. LRR repeat units lie at residues 56–79 (PVDT…AFYY), 80–103 (LVEL…SFYN), 104–128 (LKQL…LLDM), 129–151 (PLLR…ALRY), and 152–175 (LKNL…FLES). Residues 201-253 (NPWFCDCHISKMIELSKVVDPAIVLLDPLMTCSEPERLTGILFQRAELEHCLK) enclose the LRRCT domain. The region spanning 254–344 (PSVMTSATKI…GMSEAVVTVT (91 aa)) is the Ig-like domain. Cysteine 275 and cysteine 328 are oxidised to a cystine. Asparagine 296 carries N-linked (GlcNAc...) asparagine glycosylation. The disordered stretch occupies residues 351 to 375 (TPIPPDTSERTGDHPEWDVQPGSGR). Positions 357 to 367 (TSERTGDHPEW) are enriched in basic and acidic residues. The Fibronectin type-III domain maps to 486–574 (AIENLRVVSE…QCITFSTERV (89 aa)). Residues 583 to 603 (LLLVVTSTACVVILPLICFLL) form a helical membrane-spanning segment. Topologically, residues 604–679 (YKVCKLQCKS…SEGSRPEYYC (76 aa)) are cytoplasmic.

In terms of processing, glycosylated. In terms of tissue distribution, detected in the outer plexiform layer (OPL) of the retina where it localizes to ON-bipolar cells (at protein level).

The protein resides in the cell projection. The protein localises to the dendrite. It localises to the perikaryon. Its subcellular location is the endoplasmic reticulum membrane. Its function is as follows. Plays a role in the synapse formation and synaptic transmission between cone photoreceptor cells and retinal bipolar cells. Required for normal transmission of a light-evoked stimulus from the cone photoreceptor cells to the ON-bipolar cells and ON-ganglion cells in the inner retina. Required in retinal ON-bipolar cells for normal localization of the cation channel TRPM1 at dendrite tips. Seems to play a specific role in synaptic contacts made by ON-bipolar cells with cone photoreceptor pedicles. May also have a role in cone synapse formation. Might facilitate FGFR1 exit from the endoplasmic reticulum to the Golgi. Could be a regulator of the FGFRs. The chain is Leucine-rich repeat, immunoglobulin-like domain and transmembrane domain-containing protein 3 (LRIT3) from Homo sapiens (Human).